The following is a 66-amino-acid chain: Phylloseptin-B1 (66 aa).

Residues 1-22 form the signal peptide; sequence MAFLKKSLFLVLFLGLVSLSIC. A propeptide spanning residues 23–46 is cleaved from the precursor; that stretch reads EEEKRETEEKEYDQGEDDKSEEKR. Leu65 is modified (leucine amide).

This sequence belongs to the frog skin active peptide (FSAP) family. Phylloseptin subfamily. In terms of tissue distribution, expressed by the skin glands.

The protein localises to the secreted. Its subcellular location is the target cell membrane. Antimicrobial peptide with activity against only a few strains of Gram-positive bacteria (S.aureus and B.megaterium). Acts in a synergistic effect in combination with Plasticin-B1 at doses that are not active alone. This chain is Phylloseptin-B1, found in Phyllomedusa bicolor (Two-colored leaf frog).